The primary structure comprises 226 residues: uncharacterized protein (226 aa).

The Response regulatory domain occupies 1-112; it reads MLVEDDHSIS…ELTARVKAAI (112 aa). A 4-aspartylphosphate modification is found at aspartate 48. The segment at residues 126–225 is a DNA-binding region (ompR/PhoB-type); that stretch reads NKVIRIHQLA…LWGIGYKLGE (100 aa).

Phosphorylated by YcbM.

Its subcellular location is the cytoplasm. Functionally, member of the two-component regulatory system YcbM/YcbL. This is an uncharacterized protein from Bacillus subtilis (strain 168).